A 424-amino-acid polypeptide reads, in one-letter code: CinA-like protein (424 aa).

This sequence belongs to the CinA family.

This chain is CinA-like protein, found in Syntrophobacter fumaroxidans (strain DSM 10017 / MPOB).